A 320-amino-acid chain; its full sequence is Methionyl-tRNA formyltransferase (320 aa).

111–114 (SLLP) is a binding site for (6S)-5,6,7,8-tetrahydrofolate.

Belongs to the Fmt family.

The enzyme catalyses L-methionyl-tRNA(fMet) + (6R)-10-formyltetrahydrofolate = N-formyl-L-methionyl-tRNA(fMet) + (6S)-5,6,7,8-tetrahydrofolate + H(+). Its function is as follows. Attaches a formyl group to the free amino group of methionyl-tRNA(fMet). The formyl group appears to play a dual role in the initiator identity of N-formylmethionyl-tRNA by promoting its recognition by IF2 and preventing the misappropriation of this tRNA by the elongation apparatus. The chain is Methionyl-tRNA formyltransferase from Bifidobacterium adolescentis (strain ATCC 15703 / DSM 20083 / NCTC 11814 / E194a).